The sequence spans 126 residues: Histone H2B 1/2/3/4/6 (126 aa).

Residues 1–12 are compositionally biased toward low complexity; it reads MPEPAKSAPAPK. The tract at residues 1-36 is disordered; that stretch reads MPEPAKSAPAPKKGSKKAVTKTQKKGDKKRKKSRKE. Residues Lys-6 and Lys-13 each carry the N6-acetyllysine modification. Residues 13 to 34 show a composition bias toward basic residues; it reads KGSKKAVTKTQKKGDKKRKKSR. Phosphoserine is present on Ser-15. Residues Lys-16 and Lys-21 each carry the N6-acetyllysine modification. Residue Lys-121 forms a Glycyl lysine isopeptide (Lys-Gly) (interchain with G-Cter in ubiquitin) linkage.

Belongs to the histone H2B family. The nucleosome is a histone octamer containing two molecules each of H2A, H2B, H3 and H4 assembled in one H3-H4 heterotetramer and two H2A-H2B heterodimers. The octamer wraps approximately 147 bp of DNA. In terms of processing, monoubiquitination of Lys-121 by the BRE1 gives a specific tag for epigenetic transcriptional activation and is also prerequisite for histone H3 'Lys-4' and 'Lys-79' methylation. Post-translationally, phosphorylated on Ser-15 during apoptosis; which facilitates apoptotic chromatin condensation.

The protein localises to the nucleus. The protein resides in the chromosome. Functionally, core component of nucleosome. Nucleosomes wrap and compact DNA into chromatin, limiting DNA accessibility to the cellular machineries which require DNA as a template. Histones thereby play a central role in transcription regulation, DNA repair, DNA replication and chromosomal stability. DNA accessibility is regulated via a complex set of post-translational modifications of histones, also called histone code, and nucleosome remodeling. Has broad-spectrum antibacterial activity. May be important in the antimicrobial defenses of chick reproductive system during follicle development in the ovary and egg formation in the oviduct. This is Histone H2B 1/2/3/4/6 (H2B-I) from Gallus gallus (Chicken).